The sequence spans 797 residues: Complex I intermediate-associated protein 84, mitochondrial (797 aa).

Residues 1–69 (MRSHLARNAT…ALCTRTSKRT (69 aa)) constitute a mitochondrion transit peptide.

The protein localises to the mitochondrion. Chaperone protein involved in the assembly of the mitochondrial NADH:ubiquinone oxidoreductase complex (complex I). In Neurospora crassa (strain ATCC 24698 / 74-OR23-1A / CBS 708.71 / DSM 1257 / FGSC 987), this protein is Complex I intermediate-associated protein 84, mitochondrial (cia84).